An 858-amino-acid polypeptide reads, in one-letter code: Respiratory burst oxidase homolog protein D (858 aa).

The span at 1-13 (MQNPEDHHSDREL) shows a compositional bias: basic and acidic residues. The tract at residues 1 to 27 (MQNPEDHHSDRELSSPSNTTKSNDDKN) is disordered. The Cytoplasmic segment spans residues 1-318 (MQNPEDHHSD…KYFLLDNWRR (318 aa)). EF-hand-like regions lie at residues 134 to 144 (TATSDSLLPRA) and 171 to 182 (RNITSGCISKEQ). EF-hand domains are found at residues 194–229 (SFDSRLRTFFDMVDKDADGRLTEEEVREIICLSASA) and 238–273 (QAAEYAALIMEELDRDQKGYIMLENLEMLLLEAPIQ). D207, D209, D211, R213, and E218 together coordinate Ca(2+). A helical membrane pass occupies residues 319–339 (VWVLLLWIGVMAGLFAYKYVQ). Topologically, residues 340 to 351 (YKNKAAFNVMGH) are extracellular. The helical transmembrane segment at 352-372 (CVCVAKGAAEVLKLNMALILL) threads the bilayer. The region spanning 357–514 (KGAAEVLKLN…LFVIVYSLLI (158 aa)) is the Ferric oxidoreductase domain. Residues 373 to 397 (PVCRNTITWLRNKTKLGGAVPFDDN) lie on the Cytoplasmic side of the membrane. The chain crosses the membrane as a helical span at residues 398-418 (INFHKVVAGAIAVGVGIHVLA). The Extracellular portion of the chain corresponds to 419-454 (HMTCDFPRLLNASPEKYKPMEPYFGDQPRNYWHFVK). A helical transmembrane segment spans residues 455–475 (GVEGVSGIIMVVLMSIAFTLA). Residues 476–497 (SQRFRRNKIRLPRPLNKLTGFN) lie on the Cytoplasmic side of the membrane. A helical membrane pass occupies residues 498–518 (AFWYSHHLFVIVYSLLIVHGI). Residues 519-675 (ELYLTKEWYK…APAQDYKEYE (157 aa)) are Extracellular-facing. The FAD-binding FR-type domain occupies 548 to 670 (LRAFRSSVKD…DGPYGAPAQD (123 aa)). A helical transmembrane segment spans residues 676-696 (VLLLVGLGIGATPMISIVKDI). At 697–858 (VNNMKEEKYD…TKFDFHKENF (162 aa)) the chain is on the cytoplasmic side.

This sequence belongs to the RBOH (TC 5.B.1.3) family. Monomer and homodimer. In terms of processing, phosphorylated by CPK. Expressed in leaves.

It localises to the membrane. Its function is as follows. Calcium-dependent NADPH oxidase that generates superoxide. May be responsible for the oxidative burst in response to pathogen attack in the leaves. The protein is Respiratory burst oxidase homolog protein D (RBOHD) of Solanum tuberosum (Potato).